The following is a 173-amino-acid chain: Crossover junction endodeoxyribonuclease RuvC (173 aa).

Catalysis depends on residues Asp-8, Glu-67, and Asp-139. Mg(2+) is bound by residues Asp-8, Glu-67, and Asp-139.

This sequence belongs to the RuvC family. As to quaternary structure, homodimer which binds Holliday junction (HJ) DNA. The HJ becomes 2-fold symmetrical on binding to RuvC with unstacked arms; it has a different conformation from HJ DNA in complex with RuvA. In the full resolvosome a probable DNA-RuvA(4)-RuvB(12)-RuvC(2) complex forms which resolves the HJ. Requires Mg(2+) as cofactor.

The protein resides in the cytoplasm. It carries out the reaction Endonucleolytic cleavage at a junction such as a reciprocal single-stranded crossover between two homologous DNA duplexes (Holliday junction).. Its function is as follows. The RuvA-RuvB-RuvC complex processes Holliday junction (HJ) DNA during genetic recombination and DNA repair. Endonuclease that resolves HJ intermediates. Cleaves cruciform DNA by making single-stranded nicks across the HJ at symmetrical positions within the homologous arms, yielding a 5'-phosphate and a 3'-hydroxyl group; requires a central core of homology in the junction. The consensus cleavage sequence is 5'-(A/T)TT(C/G)-3'. Cleavage occurs on the 3'-side of the TT dinucleotide at the point of strand exchange. HJ branch migration catalyzed by RuvA-RuvB allows RuvC to scan DNA until it finds its consensus sequence, where it cleaves and resolves the cruciform DNA. In Shewanella sp. (strain MR-4), this protein is Crossover junction endodeoxyribonuclease RuvC.